A 463-amino-acid chain; its full sequence is Cysteine--tRNA ligase (463 aa).

Position 29 (C29) interacts with Zn(2+). Residues 31–41 (ATPQTQPHIGH) carry the 'HIGH' region motif. C212, H237, and E241 together coordinate Zn(2+). A 'KMSKS' region motif is present at residues 268–272 (KMSKS). K271 is an ATP binding site.

Belongs to the class-I aminoacyl-tRNA synthetase family. In terms of assembly, monomer. Zn(2+) serves as cofactor.

The protein localises to the cytoplasm. The catalysed reaction is tRNA(Cys) + L-cysteine + ATP = L-cysteinyl-tRNA(Cys) + AMP + diphosphate. The chain is Cysteine--tRNA ligase from Corynebacterium diphtheriae (strain ATCC 700971 / NCTC 13129 / Biotype gravis).